Reading from the N-terminus, the 93-residue chain is Protein Tat (93 aa).

The interaction with human CREBBP stretch occupies residues 1 to 24 (MEPVDPELEPWNHPGSQPKTACNN). Residues 1–48 (MEPVDPELEPWNHPGSQPKTACNNCHCKVCCYHCVYCFTKKGLGISYG) are transactivation. Cys22, Cys25, and Cys27 together coordinate Zn(2+). A cysteine-rich region spans residues 22 to 37 (CNNCHCKVCCYHCVYC). Position 28 is an N6-acetyllysine; by host PCAF (Lys28). Zn(2+) contacts are provided by Cys30, His33, Cys34, and Cys37. The tract at residues 38–48 (FTKKGLGISYG) is core. Over residues 48 to 58 (GRKKRSQRRRT) the composition is skewed to basic residues. The disordered stretch occupies residues 48 to 93 (GRKKRSQRRRTPQSNKSHQDPLPKQPLSQRLGDQTGQKEQKKTLES). Positions 49 to 57 (RKKRSQRRR) match the Nuclear localization signal, RNA-binding (TAR), and protein transduction motif. Residues 49-86 (RKKRSQRRRTPQSNKSHQDPLPKQPLSQRLGDQTGQKE) are interaction with the host capping enzyme RNGTT. N6-acetyllysine; by host EP300 and GCN5L2 occurs at positions 50 and 51. Arg52 bears the Asymmetric dimethylarginine; by host PRMT6 mark. Residue Lys71 forms a Glycyl lysine isopeptide (Lys-Gly) (interchain with G-Cter in ubiquitin) linkage. Over residues 73 to 82 (PLSQRLGDQT) the composition is skewed to polar residues. The span at 83-93 (GQKEQKKTLES) shows a compositional bias: basic and acidic residues.

The protein belongs to the lentiviruses Tat family. As to quaternary structure, interacts with host CCNT1. Associates with the P-TEFb complex composed at least of Tat, P-TEFb (CDK9 and CCNT1), TAR RNA, RNA Pol II. Recruits the HATs CREBBP, TAF1/TFIID, EP300, PCAF and GCN5L2. Interacts with host KAT5/Tip60; this interaction targets the latter to degradation. Interacts with the host deacetylase SIRT1. Interacts with host capping enzyme RNGTT; this interaction stimulates RNGTT. Binds to host KDR, and to the host integrins ITGAV/ITGB3 and ITGA5/ITGB1. Interacts with host KPNB1/importin beta-1 without previous binding to KPNA1/importin alpha-1. Interacts with EIF2AK2. Interacts with host nucleosome assembly protein NAP1L1; this interaction may be required for the transport of Tat within the nucleus, since the two proteins interact at the nuclear rim. Interacts with host C1QBP/SF2P32; this interaction involves lysine-acetylated Tat. Interacts with the host chemokine receptors CCR2, CCR3 and CXCR4. Interacts with host DPP4/CD26; this interaction may trigger an anti-proliferative effect. Interacts with host LDLR. Interacts with the host extracellular matrix metalloproteinase MMP1. Interacts with host PRMT6; this interaction mediates Tat's methylation. Interacts with, and is ubiquitinated by MDM2/Hdm2. Interacts with host PSMC3 and HTATIP2. Interacts with STAB1; this interaction may overcome SATB1-mediated repression of IL2 and IL2RA (interleukin) in T cells by binding to the same domain than HDAC1. Interacts (when acetylated) with human CDK13, thereby increasing HIV-1 mRNA splicing and promoting the production of the doubly spliced HIV-1 protein Nef. Interacts with host TBP; this interaction modulates the activity of transcriptional pre-initiation complex. Interacts with host RELA. In terms of processing, asymmetrical arginine methylation by host PRMT6 seems to diminish the transactivation capacity of Tat and affects the interaction with host CCNT1. Acetylation by EP300, CREBBP, GCN5L2/GCN5 and PCAF regulates the transactivation activity of Tat. EP300-mediated acetylation of Lys-50 promotes dissociation of Tat from the TAR RNA through the competitive binding to PCAF's bromodomain. In addition, the non-acetylated Tat's N-terminus can also interact with PCAF. PCAF-mediated acetylation of Lys-28 enhances Tat's binding to CCNT1. Lys-50 is deacetylated by SIRT1. Post-translationally, polyubiquitination by host MDM2 does not target Tat to degradation, but activates its transactivation function and fosters interaction with CCNT1 and TAR RNA. In terms of processing, phosphorylated by EIF2AK2 on serine and threonine residues adjacent to the basic region important for TAR RNA binding and function. Phosphorylation of Tat by EIF2AK2 is dependent on the prior activation of EIF2AK2 by dsRNA.

Its subcellular location is the host nucleus. It localises to the host nucleolus. It is found in the host cytoplasm. The protein localises to the secreted. Functionally, transcriptional activator that increases RNA Pol II processivity, thereby increasing the level of full-length viral transcripts. Recognizes a hairpin structure at the 5'-LTR of the nascent viral mRNAs referred to as the transactivation responsive RNA element (TAR) and recruits the cyclin T1-CDK9 complex (P-TEFb complex) that will in turn hyperphosphorylate the RNA polymerase II to allow efficient elongation. The CDK9 component of P-TEFb and other Tat-activated kinases hyperphosphorylate the C-terminus of RNA Pol II that becomes stabilized and much more processive. Other factors such as HTATSF1/Tat-SF1, SUPT5H/SPT5, and HTATIP2 are also important for Tat's function. Besides its effect on RNA Pol II processivity, Tat induces chromatin remodeling of proviral genes by recruiting the histone acetyltransferases (HATs) CREBBP, EP300 and PCAF to the chromatin. This also contributes to the increase in proviral transcription rate, especially when the provirus integrates in transcriptionally silent region of the host genome. To ensure maximal activation of the LTR, Tat mediates nuclear translocation of NF-kappa-B by interacting with host RELA. Through its interaction with host TBP, Tat may also modulate transcription initiation. Tat can reactivate a latently infected cell by penetrating in it and transactivating its LTR promoter. In the cytoplasm, Tat is thought to act as a translational activator of HIV-1 mRNAs. Extracellular circulating Tat can be endocytosed by surrounding uninfected cells via the binding to several surface receptors such as CD26, CXCR4, heparan sulfate proteoglycans (HSPG) or LDLR. Neurons are rarely infected, but they internalize Tat via their LDLR. Through its interaction with nuclear HATs, Tat is potentially able to control the acetylation-dependent cellular gene expression. Modulates the expression of many cellular genes involved in cell survival, proliferation or in coding for cytokines or cytokine receptors. Tat plays a role in T-cell and neurons apoptosis. Tat induced neurotoxicity and apoptosis probably contribute to neuroAIDS. Circulating Tat also acts as a chemokine-like and/or growth factor-like molecule that binds to specific receptors on the surface of the cells, affecting many cellular pathways. In the vascular system, Tat binds to ITGAV/ITGB3 and ITGA5/ITGB1 integrins dimers at the surface of endothelial cells and competes with bFGF for heparin-binding sites, leading to an excess of soluble bFGF. The polypeptide is Protein Tat (Pan troglodytes (Chimpanzee)).